The following is a 119-amino-acid chain: Large ribosomal subunit protein bL20 (119 aa).

It belongs to the bacterial ribosomal protein bL20 family.

Functionally, binds directly to 23S ribosomal RNA and is necessary for the in vitro assembly process of the 50S ribosomal subunit. It is not involved in the protein synthesizing functions of that subunit. This Alkaliphilus metalliredigens (strain QYMF) protein is Large ribosomal subunit protein bL20.